A 363-amino-acid polypeptide reads, in one-letter code: 3-isopropylmalate dehydrogenase (363 aa).

Residue 78 to 91 participates in NAD(+) binding; it reads GPKWEHLPPDQQPE. Residues R99, R109, R138, and D227 each coordinate substrate. Residues D227, D251, and D255 each contribute to the Mg(2+) site. Position 285–297 (285–297) interacts with NAD(+); that stretch reads GSAPDITGKNIAN.

The protein belongs to the isocitrate and isopropylmalate dehydrogenases family. LeuB type 1 subfamily. As to quaternary structure, homodimer. It depends on Mg(2+) as a cofactor. Mn(2+) is required as a cofactor.

It is found in the cytoplasm. It carries out the reaction (2R,3S)-3-isopropylmalate + NAD(+) = 4-methyl-2-oxopentanoate + CO2 + NADH. It participates in amino-acid biosynthesis; L-leucine biosynthesis; L-leucine from 3-methyl-2-oxobutanoate: step 3/4. Functionally, catalyzes the oxidation of 3-carboxy-2-hydroxy-4-methylpentanoate (3-isopropylmalate) to 3-carboxy-4-methyl-2-oxopentanoate. The product decarboxylates to 4-methyl-2 oxopentanoate. The polypeptide is 3-isopropylmalate dehydrogenase (Shigella boydii serotype 4 (strain Sb227)).